Consider the following 275-residue polypeptide: MRPLQAEIIKALHVAPTIDPEVEIRRSIDFLKAYLTKNTFLKTYVLGISGGQDSTLAGKLTEMAITEMRQETGDDRYQFIAVRLPYGNQADEADAMAAIDFMQADVTDRVDIQPATDAMVTALEANQLTIHDFNKGNIKARQRMIVQYGIAGEMHGAVVGTDHAAEAVTGFYTKYGDGGADIVPLWRLNKRQGKQMLAALDAPKHLYDKVPTADLEEDRPALPDEVALGVRYDDIDDYLEGRTVSDAAAEKIEAWYLKTAHKRHAAITVFDDFWK.

ATP is bound at residue 47–54 (GISGGQDS). Asp53 contributes to the Mg(2+) binding site. Arg141 serves as a coordination point for deamido-NAD(+). Thr161 provides a ligand contact to ATP. Glu166 is a binding site for Mg(2+). Deamido-NAD(+)-binding residues include Lys174 and Asp181. ATP-binding residues include Lys190 and Thr212. Deamido-NAD(+) is bound at residue 261–262 (HK).

It belongs to the NAD synthetase family. In terms of assembly, homodimer.

It carries out the reaction deamido-NAD(+) + NH4(+) + ATP = AMP + diphosphate + NAD(+) + H(+). Its pathway is cofactor biosynthesis; NAD(+) biosynthesis; NAD(+) from deamido-NAD(+) (ammonia route): step 1/1. Functionally, catalyzes the ATP-dependent amidation of deamido-NAD to form NAD. Uses ammonia as a nitrogen source. In Lactiplantibacillus plantarum (strain ATCC BAA-793 / NCIMB 8826 / WCFS1) (Lactobacillus plantarum), this protein is NH(3)-dependent NAD(+) synthetase.